The chain runs to 115 residues: Large ribosomal subunit protein bL19 (115 aa).

It belongs to the bacterial ribosomal protein bL19 family.

This protein is located at the 30S-50S ribosomal subunit interface and may play a role in the structure and function of the aminoacyl-tRNA binding site. The protein is Large ribosomal subunit protein bL19 of Lactobacillus delbrueckii subsp. bulgaricus (strain ATCC BAA-365 / Lb-18).